The chain runs to 478 residues: MTHSTQQLSPEGVAEGKRGRLIRELVNRDKTPLIILIMAAVVGVVTGLLGVAFDRGVDWVQQQRLLALANVADSALLVWPLAFIMSALLAMMGYFLVSRFAPEAGGSGIPEIEGAMEEMRPVRWWRVIPVKFIGGLGTLGAGMVLGREGPMVQMGGNSGRMIVDIFRLRSPEARHSLLATGAAAGLSAAFNAPLAGILFVIEEMRSQFRYSLVSIKAVFIGVITSTIVYRYFNGERAIIEVGKLSDAPLNTLWLYLLLGIIFGAVGVIFNALIFRTQDMFVRFHGGDWRKLVLIGGLLGGMCGLLALLHGNAVGGGFALIPIAAAGNFSIGMLLFIFIARVITTLLCFGSGAPGGIFAPMLALGTILGTAFGLSCAHFFPQYGIEAGTFAIAGMGALFAASVRAPLTGIVLVLEMTDNYQLILPMIVTCLGATLIAQFMGGKPLYSAILARTLAKQEQARATVIAQEPAVENTPQTGR.

Residues 1–32 (MTHSTQQLSPEGVAEGKRGRLIRELVNRDKTP) are Cytoplasmic-facing. Residues 33–69 (LIILIMAAVVGVVTGLLGVAFDRGVDWVQQQRLLALA) traverse the membrane as a helical segment. The Periplasmic portion of the chain corresponds to 70–76 (NVADSAL). The helical transmembrane segment at 77–100 (LVWPLAFIMSALLAMMGYFLVSRF) threads the bilayer. The short motif at 106 to 110 (GSGIP) is the Selectivity filter part_1 element. A chloride-binding site is contributed by Ser107. The segment at residues 109–116 (IPEIEGAM) is an intramembrane region (helical). Topologically, residues 117–123 (EEMRPVR) are cytoplasmic. The next 2 helical transmembrane spans lie at 124–141 (WWRVIPVKFIGGLGTLGA) and 148–166 (EGPMVQMGGNSGRMIVDIF). The Selectivity filter part_2 motif lies at 146–150 (GREGP). Over 167 to 176 (RLRSPEARHS) the chain is Cytoplasmic. Intramembrane regions (helical) lie at residues 177–189 (LLATGAAAGLSAA) and 193–201 (PLAGILFVI). The Cytoplasmic segment spans residues 202 to 214 (EEMRSQFRYSLVS). Residues 215 to 232 (IKAVFIGVITSTIVYRYF) form a helical membrane-spanning segment. The Periplasmic segment spans residues 233–252 (NGERAIIEVGKLSDAPLNTL). A helical transmembrane segment spans residues 253–281 (WLYLLLGIIFGAVGVIFNALIFRTQDMFV). The Cytoplasmic portion of the chain corresponds to 282–287 (RFHGGD). The chain crosses the membrane as a helical span at residues 288 to 309 (WRKLVLIGGLLGGMCGLLALLH). Residues 310-329 (GNAVGGGFALIPIAAAGNFS) lie on the Periplasmic side of the membrane. 2 helical membrane-spanning segments follow: residues 330–349 (IGMLLFIFIARVITTLLCFG) and 355–376 (GIFAPMLALGTILGTAFGLSCA). Positions 355-359 (GIFAP) match the Selectivity filter part_3 motif. Ile356 and Phe357 together coordinate chloride. At 377-386 (HFFPQYGIEA) the chain is on the periplasmic side. The helical intramembrane region spans 387–401 (GTFAIAGMGALFAAS). Positions 402–404 (VRA) form an intramembrane region, note=Loop between two helices. The helical intramembrane region spans 405-416 (PLTGIVLVLEMT). The segment at residues 417–421 (DNYQL) is an intramembrane region (note=Loop between two helices). A helical membrane pass occupies residues 422-438 (ILPMIVTCLGATLIAQF). The Cytoplasmic portion of the chain corresponds to 439 to 478 (MGGKPLYSAILARTLAKQEQARATVIAQEPAVENTPQTGR). Residue Tyr445 coordinates chloride.

It belongs to the chloride channel (TC 2.A.49) family. ClcA subfamily. In terms of assembly, homodimer.

The protein localises to the cell inner membrane. It carries out the reaction 2 chloride(in) + H(+)(out) = 2 chloride(out) + H(+)(in). In terms of biological role, proton-coupled chloride transporter. Functions as antiport system and exchanges two chloride ions for 1 proton. Probably acts as an electrical shunt for an outwardly-directed proton pump that is linked to amino acid decarboxylation, as part of the extreme acid resistance (XAR) response. The protein is H(+)/Cl(-) exchange transporter ClcA of Yersinia pseudotuberculosis serotype IB (strain PB1/+).